The following is a 199-amino-acid chain: Proteasome subunit beta 2 (199 aa).

A propeptide spans Met-1–Gly-6 (removed in mature form; by autocatalysis). Thr-7 functions as the Nucleophile in the catalytic mechanism.

The protein belongs to the peptidase T1B family. The 20S proteasome core is composed of 14 alpha and 14 beta subunits that assemble into four stacked heptameric rings, resulting in a barrel-shaped structure. The two inner rings, each composed of seven catalytic beta subunits, are sandwiched by two outer rings, each composed of seven alpha subunits. The catalytic chamber with the active sites is on the inside of the barrel. Has a gated structure, the ends of the cylinder being occluded by the N-termini of the alpha-subunits. Is capped at one or both ends by the proteasome regulatory ATPase, PAN.

Its subcellular location is the cytoplasm. The enzyme catalyses Cleavage of peptide bonds with very broad specificity.. Its activity is regulated as follows. The formation of the proteasomal ATPase PAN-20S proteasome complex, via the docking of the C-termini of PAN into the intersubunit pockets in the alpha-rings, triggers opening of the gate for substrate entry. Interconversion between the open-gate and close-gate conformations leads to a dynamic regulation of the 20S proteasome proteolysis activity. Component of the proteasome core, a large protease complex with broad specificity involved in protein degradation. The sequence is that of Proteasome subunit beta 2 from Thermococcus kodakarensis (strain ATCC BAA-918 / JCM 12380 / KOD1) (Pyrococcus kodakaraensis (strain KOD1)).